A 95-amino-acid polypeptide reads, in one-letter code: Co-chaperonin GroES (95 aa).

It belongs to the GroES chaperonin family. In terms of assembly, heptamer of 7 subunits arranged in a ring. Interacts with the chaperonin GroEL.

The protein localises to the cytoplasm. Functionally, together with the chaperonin GroEL, plays an essential role in assisting protein folding. The GroEL-GroES system forms a nano-cage that allows encapsulation of the non-native substrate proteins and provides a physical environment optimized to promote and accelerate protein folding. GroES binds to the apical surface of the GroEL ring, thereby capping the opening of the GroEL channel. This is Co-chaperonin GroES from Rickettsia akari (strain Hartford).